The primary structure comprises 345 residues: Probable deoxyhypusine synthase 2 (345 aa).

K292 (nucleophile) is an active-site residue.

Belongs to the deoxyhypusine synthase family. NAD(+) serves as cofactor.

It catalyses the reaction [eIF5A protein]-L-lysine + spermidine = [eIF5A protein]-deoxyhypusine + propane-1,3-diamine. The protein operates within protein modification; eIF5A hypusination. In terms of biological role, catalyzes the NAD-dependent oxidative cleavage of spermidine and the subsequent transfer of the butylamine moiety of spermidine to the epsilon-amino group of a specific lysine residue of the eIF-5A precursor protein to form the intermediate deoxyhypusine residue. The chain is Probable deoxyhypusine synthase 2 (dys2) from Methanosarcina acetivorans (strain ATCC 35395 / DSM 2834 / JCM 12185 / C2A).